A 387-amino-acid polypeptide reads, in one-letter code: Leucine aminopeptidase 1 (387 aa).

Positions 1–18 (MKIRAALALSATASGVLA) are cleaved as a signal peptide. Residues 19 to 87 (AVVPQQALLN…YPTLHQASNV (69 aa)) constitute a propeptide that is removed on maturation. The N-linked (GlcNAc...) asparagine glycan is linked to N179. Residues H187, D206, E245, and D272 each coordinate Zn(2+). C321 and C325 form a disulfide bridge. H354 is a binding site for Zn(2+).

This sequence belongs to the peptidase M28 family. M28E subfamily. As to quaternary structure, monomer. Requires Zn(2+) as cofactor.

It is found in the secreted. In terms of biological role, extracellular aminopeptidase that allows assimilation of proteinaceous substrates. The chain is Leucine aminopeptidase 1 (lap1) from Aspergillus oryzae (strain ATCC 42149 / RIB 40) (Yellow koji mold).